The chain runs to 130 residues: Splicing regulatory small protein (130 aa).

The segment covering 1 to 10 (MRTKPQRPRA) has biased composition (basic residues). Disordered stretches follow at residues 1-29 (MRTK…EETG) and 74-130 (GRAL…STRR). Residues 16 to 22 (GQPCGSP) form a mediates interaction with SRSF3 region. Over residues 77–98 (LEPKADPHTCPYGRKESRGEKV) the composition is skewed to basic and acidic residues. Residues 120 to 130 (SLKSGSPSTRR) are compositionally biased toward polar residues.

As to quaternary structure, interacts with SRSF3; increases SRSF3 binding to specific exons.

It localises to the nucleus. In terms of biological role, interacts with the splicing factor SRSF3 and increases its binding to specific exons within pre-mRNA, thereby regulating exon-inclusion during alternative splicing. Does not directly bind pre-mRNA and could regulate a wider range of splicing factors through a similar mechanism. This chain is Splicing regulatory small protein, found in Homo sapiens (Human).